The sequence spans 393 residues: Putative competence-damage inducible protein (393 aa).

It belongs to the CinA family.

This Streptococcus suis (strain 05ZYH33) protein is Putative competence-damage inducible protein.